The chain runs to 913 residues: Probable TonB-dependent receptor HI_1217 (913 aa).

The N-terminal stretch at 1–27 (MKKAIKLNLITLGLINTIGMTITQAQA) is a signal peptide. The TBDR plug domain maps to 42 to 165 (SNDKKPFTEA…LAGSANFRTL (124 aa)). Positions 176-913 (PFGIILKGMT…TYILSLNYKF (738 aa)) constitute a TBDR beta-barrel domain. Positions 896-913 (LYNFARGRTYILSLNYKF) match the TonB C-terminal box motif.

This sequence belongs to the TonB-dependent receptor family.

It localises to the cell outer membrane. Its function is as follows. Probable receptor, TonB-dependent. The polypeptide is Probable TonB-dependent receptor HI_1217 (Haemophilus influenzae (strain ATCC 51907 / DSM 11121 / KW20 / Rd)).